A 343-amino-acid polypeptide reads, in one-letter code: Anthranilate phosphoribosyltransferase (343 aa).

Residues G86, G89–D90, T94, N96–T99, K114–G122, and S126 contribute to the 5-phospho-alpha-D-ribose 1-diphosphate site. G86 contributes to the anthranilate binding site. S98 contributes to the Mg(2+) binding site. An anthranilate-binding site is contributed by N117. Residue R172 participates in anthranilate binding. The Mg(2+) site is built by D231 and E232.

It belongs to the anthranilate phosphoribosyltransferase family. Homodimer. Mg(2+) is required as a cofactor.

It carries out the reaction N-(5-phospho-beta-D-ribosyl)anthranilate + diphosphate = 5-phospho-alpha-D-ribose 1-diphosphate + anthranilate. Its pathway is amino-acid biosynthesis; L-tryptophan biosynthesis; L-tryptophan from chorismate: step 2/5. In terms of biological role, catalyzes the transfer of the phosphoribosyl group of 5-phosphorylribose-1-pyrophosphate (PRPP) to anthranilate to yield N-(5'-phosphoribosyl)-anthranilate (PRA). The chain is Anthranilate phosphoribosyltransferase from Synechococcus sp. (strain JA-3-3Ab) (Cyanobacteria bacterium Yellowstone A-Prime).